The sequence spans 671 residues: K(+)-insensitive pyrophosphate-energized proton pump (671 aa).

5 consecutive transmembrane segments (helical) span residues 4–24, 57–77, 79–99, 128–148, and 156–176; these read LIFT…FFAK, TIAV…DEGL, IAAG…IGMS, AVTG…LYIL, and VGFG…GGIF. Substrate is bound at residue K178. Mg(2+)-binding residues include D181, D185, N208, and D211. Helical transmembrane passes span 223–243, 249–269, 285–305, 310–330, 365–385, and 393–413; these read LFET…LIIG, VLYP…SVFF, GVGG…GFLM, FFYV…VTEY, TLVP…IVGG, and LYGI…IVAL. D421 is a binding site for Mg(2+). The next 4 helical transmembrane spans lie at 452 to 472, 490 to 510, 558 to 578, and 579 to 599; these read AVTK…LFAD, VVLS…AVMM, MAMP…FLGP, and EALA…ALMM. Ca(2+)-binding residues include D607, D633, and D637. K640 provides a ligand contact to substrate. The helical transmembrane segment at 650 to 670 threads the bilayer; sequence LIKVVNMVAILFSPLIIGGGF.

It belongs to the H(+)-translocating pyrophosphatase (TC 3.A.10) family. K(+)-insensitive subfamily. As to quaternary structure, homodimer. Requires Mg(2+) as cofactor.

The protein resides in the cell membrane. It carries out the reaction diphosphate + H2O + H(+)(in) = 2 phosphate + 2 H(+)(out). Proton pump that utilizes the energy of pyrophosphate hydrolysis as the driving force for proton movement across the membrane. Generates a proton motive force. This chain is K(+)-insensitive pyrophosphate-energized proton pump, found in Methanosarcina mazei (strain ATCC BAA-159 / DSM 3647 / Goe1 / Go1 / JCM 11833 / OCM 88) (Methanosarcina frisia).